Here is a 1129-residue protein sequence, read N- to C-terminus: Kinesin-like protein KIP1 (1129 aa).

Positions 1 to 49 (MLEQAEKLMKRNSSGAMSAPQSKPLARSRSSTMPTTTQKRVRSSQQSEG) are disordered. Polar residues-rich tracts occupy residues 11–21 (RNSSGAMSAPQ) and 28–48 (SRSS…QQSE). Residues 54 to 417 (NIKVYVRCRS…LEYATRAKSI (364 aa)) enclose the Kinesin motor domain. 139 to 146 (GQTGTGKT) is an ATP binding site. Coiled-coil stretches lie at residues 422–513 (QVNQ…ELDV), 681–765 (LEKE…QKIV), and 919–948 (DDQR…TLVN).

The protein belongs to the TRAFAC class myosin-kinesin ATPase superfamily. Kinesin family. BimC subfamily.

Its subcellular location is the cytoplasm. The protein localises to the cytoskeleton. It is found in the spindle. Required for assembly of the mitotic spindle. Interacts with spindle microtubules to produce an outwardly directed force acting upon the poles. Following spindle assembly, CIN8 and KIP1 apparently act to oppose a force that draws separated poles back together. This force seems to be mediate by KAR3. In Eremothecium gossypii (strain ATCC 10895 / CBS 109.51 / FGSC 9923 / NRRL Y-1056) (Yeast), this protein is Kinesin-like protein KIP1 (KIP1).